The following is a 419-amino-acid chain: Menaquinone reductase, integral membrane subunit (419 aa).

10 helical membrane-spanning segments follow: residues 23–43 (LSKF…GLYA), 61–81 (FGFG…AGAF), 98–118 (IINL…LVLV), 143–163 (VIFC…PLIL), 176–196 (AVAH…AFLS), 221–241 (FFIW…SGPV), 270–290 (IAGT…YAWA), 316–336 (LWAE…VPAL), 341–361 (VLFY…RYVM), and 383–403 (WAEW…LSLS).

The protein belongs to the NrfD family. In terms of assembly, the Qrc complex is composed of four subunits: QrcA, QrcB, QrcC and QrcD. Can form a supercomplex with the [NiFe] hydrogenase HynA1 and the tetraheme Type I cytochrome c3 TpIc(3), its physiological electron donors.

It is found in the cell inner membrane. Component of the respiratory Qrc complex, that catalyzes the reduction of the menaquinone pool using electrons transferred from the reduced periplasmic cytochrome c3, and which is probably involved in sulfate respiration. Is likely essential for growth on H(2) or formate since the periplasmic hydrogenases and/or formate dehydrogenases act as primary electron donors for the Qrc complex. The QrcD subunit anchors the protein complex to the membrane and likely interacts with the quinone pool. The sequence is that of Menaquinone reductase, integral membrane subunit from Nitratidesulfovibrio vulgaris (strain ATCC 29579 / DSM 644 / CCUG 34227 / NCIMB 8303 / VKM B-1760 / Hildenborough) (Desulfovibrio vulgaris).